Consider the following 185-residue polypeptide: Elongation factor P (185 aa).

This sequence belongs to the elongation factor P family.

The protein resides in the cytoplasm. Its pathway is protein biosynthesis; polypeptide chain elongation. Its function is as follows. Involved in peptide bond synthesis. Stimulates efficient translation and peptide-bond synthesis on native or reconstituted 70S ribosomes in vitro. Probably functions indirectly by altering the affinity of the ribosome for aminoacyl-tRNA, thus increasing their reactivity as acceptors for peptidyl transferase. In Alkaliphilus metalliredigens (strain QYMF), this protein is Elongation factor P.